A 235-amino-acid chain; its full sequence is REF/SRPP-like protein At2g47780 (235 aa).

Residues 1 to 12 (MAEDEIVVEEEQ) show a composition bias toward acidic residues. Residues 1-32 (MAEDEIVVEEEQSQPQEITPVPPSSSSSPSLV) are disordered.

This sequence belongs to the REF/SRPP family.

This is REF/SRPP-like protein At2g47780 from Arabidopsis thaliana (Mouse-ear cress).